The following is a 553-amino-acid chain: Putative transport protein YidE (553 aa).

5 consecutive transmembrane segments (helical) span residues 4–24 (IALT…IGNV), 28–48 (GIGL…HFVS), 65–85 (FGLI…FFAS), 95–115 (LFAV…HKLF), and 158–178 (MSYA…MWML). 2 consecutive RCK C-terminal domains span residues 191–276 (QQHE…VIGQ) and 279–361 (DTSL…VLGN). The next 6 membrane-spanning stretches (helical) occupy residues 371 to 391 (MLPV…PVFV), 393 to 413 (GFPA…ALIL), 439 to 459 (IVLF…NTLV), 464 to 484 (LSWI…VGIL), 493 to 513 (YLTM…LAFA), and 533 to 553 (LVMF…WSIG).

The protein belongs to the AAE transporter (TC 2.A.81) family. YidE subfamily.

The protein localises to the cell membrane. This is Putative transport protein YidE from Shigella boydii serotype 18 (strain CDC 3083-94 / BS512).